Here is a 425-residue protein sequence, read N- to C-terminus: Serine hydroxymethyltransferase (425 aa).

Residues Leu-126 and 130 to 132 (GHL) contribute to the (6S)-5,6,7,8-tetrahydrofolate site. Lys-234 carries the post-translational modification N6-(pyridoxal phosphate)lysine.

This sequence belongs to the SHMT family. Homodimer. Requires pyridoxal 5'-phosphate as cofactor.

The protein localises to the cytoplasm. It catalyses the reaction (6R)-5,10-methylene-5,6,7,8-tetrahydrofolate + glycine + H2O = (6S)-5,6,7,8-tetrahydrofolate + L-serine. The protein operates within one-carbon metabolism; tetrahydrofolate interconversion. Its pathway is amino-acid biosynthesis; glycine biosynthesis; glycine from L-serine: step 1/1. Catalyzes the reversible interconversion of serine and glycine with tetrahydrofolate (THF) serving as the one-carbon carrier. This reaction serves as the major source of one-carbon groups required for the biosynthesis of purines, thymidylate, methionine, and other important biomolecules. Also exhibits THF-independent aldolase activity toward beta-hydroxyamino acids, producing glycine and aldehydes, via a retro-aldol mechanism. In Desulfotalea psychrophila (strain LSv54 / DSM 12343), this protein is Serine hydroxymethyltransferase.